The sequence spans 472 residues: Uronate isomerase (472 aa).

The protein belongs to the metallo-dependent hydrolases superfamily. Uronate isomerase family.

It carries out the reaction D-glucuronate = D-fructuronate. It catalyses the reaction aldehydo-D-galacturonate = keto-D-tagaturonate. It participates in carbohydrate metabolism; pentose and glucuronate interconversion. In Halalkalibacterium halodurans (strain ATCC BAA-125 / DSM 18197 / FERM 7344 / JCM 9153 / C-125) (Bacillus halodurans), this protein is Uronate isomerase.